We begin with the raw amino-acid sequence, 539 residues long: 3-methylmercaptopropionyl-CoA ligase (539 aa).

Threonine 185 is a binding site for Mg(2+). 5 residues coordinate ATP: histidine 231, glycine 303, histidine 324, alanine 325, and serine 329. Residue glutamate 330 coordinates Mg(2+). Positions 359, 417, 432, and 523 each coordinate ATP.

It belongs to the ATP-dependent AMP-binding enzyme family. As to quaternary structure, homodimer. It depends on Mg(2+) as a cofactor.

The catalysed reaction is 3-(methylsulfanyl)propanoate + ATP + CoA = 3-(methylsulfanyl)propanoyl-CoA + AMP + diphosphate. With respect to regulation, ADP acts as a competitive inhibitor and inhibits the ligase activity. Its function is as follows. Involved in the assimilation of dimethylsulphoniopropionate (DMSP), an important compound in the fixation of carbon in marine phytoplankton. Catalyzes the ATP-dependent ligation of methylmercaptopropionate (MMPA) and CoA to yield methylmercaptopropionate-CoA (MMPA-CoA). In Ruegeria lacuscaerulensis (strain DSM 11314 / KCTC 2953 / ITI-1157) (Silicibacter lacuscaerulensis), this protein is 3-methylmercaptopropionyl-CoA ligase.